The primary structure comprises 367 residues: UDP-N-acetylglucosamine--N-acetylmuramyl-(pentapeptide) pyrophosphoryl-undecaprenol N-acetylglucosamine transferase (367 aa).

UDP-N-acetyl-alpha-D-glucosamine contacts are provided by residues 15 to 17, Asn127, Arg163, Ser191, Ile249, and Gln294; that span reads TGG.

This sequence belongs to the glycosyltransferase 28 family. MurG subfamily.

It localises to the cell inner membrane. The catalysed reaction is di-trans,octa-cis-undecaprenyl diphospho-N-acetyl-alpha-D-muramoyl-L-alanyl-D-glutamyl-meso-2,6-diaminopimeloyl-D-alanyl-D-alanine + UDP-N-acetyl-alpha-D-glucosamine = di-trans,octa-cis-undecaprenyl diphospho-[N-acetyl-alpha-D-glucosaminyl-(1-&gt;4)]-N-acetyl-alpha-D-muramoyl-L-alanyl-D-glutamyl-meso-2,6-diaminopimeloyl-D-alanyl-D-alanine + UDP + H(+). The protein operates within cell wall biogenesis; peptidoglycan biosynthesis. In terms of biological role, cell wall formation. Catalyzes the transfer of a GlcNAc subunit on undecaprenyl-pyrophosphoryl-MurNAc-pentapeptide (lipid intermediate I) to form undecaprenyl-pyrophosphoryl-MurNAc-(pentapeptide)GlcNAc (lipid intermediate II). The polypeptide is UDP-N-acetylglucosamine--N-acetylmuramyl-(pentapeptide) pyrophosphoryl-undecaprenol N-acetylglucosamine transferase (Burkholderia vietnamiensis (strain G4 / LMG 22486) (Burkholderia cepacia (strain R1808))).